The following is a 368-amino-acid chain: Agmatine deiminase (368 aa).

The active-site Amidino-cysteine intermediate is the cysteine 357.

The protein belongs to the agmatine deiminase family. Homodimer.

It catalyses the reaction agmatine + H2O = N-carbamoylputrescine + NH4(+). It participates in amine and polyamine biosynthesis; putrescine biosynthesis via agmatine pathway; N-carbamoylputrescine from agmatine: step 1/1. In terms of biological role, mediates the hydrolysis of agmatine into N-carbamoylputrescine in the arginine decarboxylase (ADC) pathway of putrescine biosynthesis, a basic polyamine. This is Agmatine deiminase from Ectopseudomonas mendocina (strain ymp) (Pseudomonas mendocina).